A 254-amino-acid polypeptide reads, in one-letter code: Phosphoribosylaminoimidazole-succinocarboxamide synthase (254 aa).

Belongs to the SAICAR synthetase family.

It carries out the reaction 5-amino-1-(5-phospho-D-ribosyl)imidazole-4-carboxylate + L-aspartate + ATP = (2S)-2-[5-amino-1-(5-phospho-beta-D-ribosyl)imidazole-4-carboxamido]succinate + ADP + phosphate + 2 H(+). It participates in purine metabolism; IMP biosynthesis via de novo pathway; 5-amino-1-(5-phospho-D-ribosyl)imidazole-4-carboxamide from 5-amino-1-(5-phospho-D-ribosyl)imidazole-4-carboxylate: step 1/2. The polypeptide is Phosphoribosylaminoimidazole-succinocarboxamide synthase (Brucella abortus (strain S19)).